A 55-amino-acid polypeptide reads, in one-letter code: ATP synthase F(0) complex subunit 8 (55 aa).

A helical transmembrane segment spans residues 7-24 (APWFSIMIMTWLTLALLI). The tract at residues 34–55 (TNPPSSKPSLTTKPTPWAWPWT) is disordered.

Belongs to the ATPase protein 8 family. As to quaternary structure, component of the ATP synthase complex composed at least of ATP5F1A/subunit alpha, ATP5F1B/subunit beta, ATP5MC1/subunit c (homooctomer), MT-ATP6/subunit a, MT-ATP8/subunit 8, ATP5ME/subunit e, ATP5MF/subunit f, ATP5MG/subunit g, ATP5MK/subunit k, ATP5MJ/subunit j, ATP5F1C/subunit gamma, ATP5F1D/subunit delta, ATP5F1E/subunit epsilon, ATP5PF/subunit F6, ATP5PB/subunit b, ATP5PD/subunit d, ATP5PO/subunit OSCP. ATP synthase complex consists of a soluble F(1) head domain (subunits alpha(3) and beta(3)) - the catalytic core - and a membrane F(0) domain - the membrane proton channel (subunits c, a, 8, e, f, g, k and j). These two domains are linked by a central stalk (subunits gamma, delta, and epsilon) rotating inside the F1 region and a stationary peripheral stalk (subunits F6, b, d, and OSCP).

It is found in the mitochondrion membrane. Its function is as follows. Subunit 8, of the mitochondrial membrane ATP synthase complex (F(1)F(0) ATP synthase or Complex V) that produces ATP from ADP in the presence of a proton gradient across the membrane which is generated by electron transport complexes of the respiratory chain. ATP synthase complex consist of a soluble F(1) head domain - the catalytic core - and a membrane F(1) domain - the membrane proton channel. These two domains are linked by a central stalk rotating inside the F(1) region and a stationary peripheral stalk. During catalysis, ATP synthesis in the catalytic domain of F(1) is coupled via a rotary mechanism of the central stalk subunits to proton translocation. In vivo, can only synthesize ATP although its ATP hydrolase activity can be activated artificially in vitro. Part of the complex F(0) domain. The polypeptide is ATP synthase F(0) complex subunit 8 (Aythya americana (Redhead)).